We begin with the raw amino-acid sequence, 79 residues long: Large ribosomal subunit protein bL31 (79 aa).

This sequence belongs to the bacterial ribosomal protein bL31 family. Type A subfamily. As to quaternary structure, part of the 50S ribosomal subunit.

Functionally, binds the 23S rRNA. This is Large ribosomal subunit protein bL31 (rpmE) from Rickettsia bellii (strain RML369-C).